The sequence spans 348 residues: Dihydroorotase (348 aa).

Residues His-17 and His-19 each contribute to the Zn(2+) site. Residues 19-21 (HLR) and Asn-45 contribute to the substrate site. Zn(2+) contacts are provided by Lys-103, His-140, and His-178. Lys-103 carries the post-translational modification N6-carboxylysine. His-140 contacts substrate. Residue Leu-223 coordinates substrate. Residue Asp-251 participates in Zn(2+) binding. Residue Asp-251 is part of the active site. Residues His-255 and Ala-267 each coordinate substrate.

The protein belongs to the metallo-dependent hydrolases superfamily. DHOase family. Class II DHOase subfamily. As to quaternary structure, homodimer. The cofactor is Zn(2+).

The enzyme catalyses (S)-dihydroorotate + H2O = N-carbamoyl-L-aspartate + H(+). The protein operates within pyrimidine metabolism; UMP biosynthesis via de novo pathway; (S)-dihydroorotate from bicarbonate: step 3/3. In terms of biological role, catalyzes the reversible cyclization of carbamoyl aspartate to dihydroorotate. The sequence is that of Dihydroorotase from Shigella sonnei (strain Ss046).